The chain runs to 134 residues: Small ribosomal subunit protein bS6 (134 aa).

Basic and acidic residues predominate over residues 113–122 (NRDIKEKEQP). Residues 113-134 (NRDIKEKEQPSESNVDADLKVN) are disordered.

Belongs to the bacterial ribosomal protein bS6 family.

Its function is as follows. Binds together with bS18 to 16S ribosomal RNA. The chain is Small ribosomal subunit protein bS6 from Borrelia duttonii (strain Ly).